The sequence spans 171 residues: Peptidyl-prolyl cis-trans isomerase (171 aa).

A PPIase cyclophilin-type domain is found at 7 to 170 (FFDLTIGGAP…KPVVIADCGQ (164 aa)).

It belongs to the cyclophilin-type PPIase family. As to expression, expressed in leaves, floral buds, growing shoots and stamens at anthesis.

Its subcellular location is the cytoplasm. It carries out the reaction [protein]-peptidylproline (omega=180) = [protein]-peptidylproline (omega=0). Its activity is regulated as follows. Binds cyclosporin A (CsA). CsA mediates some of its effects via an inhibitory action on PPIase. In terms of biological role, PPIases accelerate the folding of proteins. It catalyzes the cis-trans isomerization of proline imidic peptide bonds in oligopeptides. In Solanum lycopersicum (Tomato), this protein is Peptidyl-prolyl cis-trans isomerase.